The primary structure comprises 261 residues: uncharacterized protein (261 aa).

One can recognise an ABC transporter domain in the interval 1–236 (MEIKEITIIG…SRKINEVDNW (236 aa)). 36–43 (GPTGSGKS) lines the ATP pocket.

This sequence belongs to the ABC transporter superfamily.

This is an uncharacterized protein from Methanocaldococcus jannaschii (strain ATCC 43067 / DSM 2661 / JAL-1 / JCM 10045 / NBRC 100440) (Methanococcus jannaschii).